A 1005-amino-acid polypeptide reads, in one-letter code: MPENIIAGIPVHFPFEPYEVQRAYMEKVIMCLRDGTNGVLESPTGTGKTLSLLCASLAWIRTRQSEQQQYMQKLQLDQQKQATGGAGAGVADLNAVMGKANNWGVPKVIYASRTHSQLSQAMRELKRTAYANMKSVVLGSRDQLCIHPDVMREQGNSNKVNMCKLKVHAKTCSFQLRVESKKDHPDFRGPSIMDIEDLVKVGQRLKMCPYFASKELVNGADITFMPYNYLLDPKARKANKIELSNTIVILDEAHNIEKICEESASVQIRSSDVAMAIEDITHIMKIFTSGDAQDTGGPEEPKDFTLDDLTLLKEMLLELEKAIDGVVVDNKAEGTTYPAAHIYELLGKANFTYGNCATIVALLDKLVQYLMVASQHSTMLRKGGSFMVLADLLNIVFANKEDVMSKVHRSFKVHVEIEDNKQSKNAANSAKPQTGWLGKGNNAASSVTKAAKIINFWCFNPGFGMEQLLNAHVRSVILTSGTLAPLKPLIAELAIPVAQHLENPHIVDRSQVYVKIIGTGPDREQLISNYKNRDNPKYISSLGQTILNVSRIVPDGLLVFFPSYPMLNQCVDAWQASGLWADISCRKPIFLEPRGKDQFTSTMEEFYQAIRDSKGACFMAVCRGKVSEGLDFADRNGRAVIITGLPFPPLKDPKVVLKRRYLETNRTKENQLLSGQEWYNLDATRAVNQAIGRVIRHRNDYGAILLCDARFQDMSQVQQLSKWIRGHLGARPQSSPFGPIVRELRQFFKHAEQTMAQPEERVVEPLLQTVCKEEQPTLACASSSQITIKREPGTGGTKFQLASELAAQAEMANTIKTWTPADYANAAGSSTLGRRAPDAMDFMSRLNANVTSIDFNSADAGQDLVKIHKRERSSPTASESSMIAKKRYKLIGNGPLKTEPSEPATTSSSFCPTPAQSQLKEAPESRADFLREVRSVIDCDQFRSFGKALLAYKTGGDGCFETLMVLLLDVLGAPQLRYLLLGMRRYLKNEHKLEFDVRLASFQAT.

The region spanning 7 to 322 (AGIPVHFPFE…KEMLLELEKA (316 aa)) is the Helicase ATP-binding domain. 42 to 49 (SPTGTGKT) is a binding site for ATP. 4 residues coordinate [4Fe-4S] cluster: Cys-145, Cys-163, Cys-172, and Cys-208. The DEAH box motif lies at 251–254 (DEAH). Phosphothreonine is present on Thr-876. The segment at 893-917 (NGPLKTEPSEPATTSSSFCPTPAQS) is disordered.

The protein belongs to the helicase family. RAD3/XPD subfamily.

The protein resides in the nucleus. The enzyme catalyses ATP + H2O = ADP + phosphate + H(+). Functionally, a probable ATP-dependent DNA helicase implicated in DNA repair and the maintenance of genomic stability. Acts as an anti-recombinase to counteract toxic recombination and limit crossover during meiosis. Regulates meiotic recombination and crossover homeostasis by physically dissociating strand invasion events and thereby promotes noncrossover repair by meiotic synthesis dependent strand annealing (SDSA) as well as disassembly of D loop recombination intermediates. In Drosophila virilis (Fruit fly), this protein is Regulator of telomere elongation helicase 1 homolog.